Reading from the N-terminus, the 94-residue chain is Large ribosomal subunit protein eL37 (94 aa).

The Zn(2+) site is built by Cys-19, Cys-22, Cys-34, and Cys-37. The C4-type zinc finger occupies 19-37 (CRRCGKATYHKQKLRCAAC).

This sequence belongs to the eukaryotic ribosomal protein eL37 family. Zn(2+) serves as cofactor.

The protein localises to the cytoplasm. In terms of biological role, binds to the 23S rRNA. The sequence is that of Large ribosomal subunit protein eL37 (RPL37) from Tetrahymena thermophila (strain SB210).